Consider the following 337-residue polypeptide: Protein RecA (337 aa).

Gly66–Thr73 contributes to the ATP binding site.

It belongs to the RecA family.

The protein resides in the cytoplasm. Can catalyze the hydrolysis of ATP in the presence of single-stranded DNA, the ATP-dependent uptake of single-stranded DNA by duplex DNA, and the ATP-dependent hybridization of homologous single-stranded DNAs. It interacts with LexA causing its activation and leading to its autocatalytic cleavage. This chain is Protein RecA, found in Mesomycoplasma hyopneumoniae (strain 232) (Mycoplasma hyopneumoniae).